Reading from the N-terminus, the 351-residue chain is Hydroxymethylglutaryl-CoA synthase (351 aa).

The Proton donor/acceptor role is filled by glutamate 80. Cysteine 112 serves as the catalytic Acyl-thioester intermediate. The (3S)-3-hydroxy-3-methylglutaryl-CoA site is built by cysteine 112 and serine 153. CoA is bound at residue arginine 199. (3S)-3-hydroxy-3-methylglutaryl-CoA is bound by residues threonine 201 and histidine 234. Histidine 234 serves as the catalytic Proton donor/acceptor. Position 239 (lysine 239) interacts with CoA. (3S)-3-hydroxy-3-methylglutaryl-CoA is bound by residues arginine 243, asparagine 266, and serine 296.

The protein belongs to the thiolase-like superfamily. Archaeal HMG-CoA synthase family. In terms of assembly, interacts with acetoacetyl-CoA thiolase that catalyzes the precedent step in the pathway and with a DUF35 protein. The acetoacetyl-CoA thiolase/HMG-CoA synthase complex channels the intermediate via a fused CoA-binding site, which allows for efficient coupling of the endergonic thiolase reaction with the exergonic HMGCS reaction.

It carries out the reaction acetoacetyl-CoA + acetyl-CoA + H2O = (3S)-3-hydroxy-3-methylglutaryl-CoA + CoA + H(+). It functions in the pathway metabolic intermediate biosynthesis; (R)-mevalonate biosynthesis; (R)-mevalonate from acetyl-CoA: step 2/3. Functionally, catalyzes the condensation of acetyl-CoA with acetoacetyl-CoA to form 3-hydroxy-3-methylglutaryl-CoA (HMG-CoA). Functions in the mevalonate (MVA) pathway leading to isopentenyl diphosphate (IPP), a key precursor for the biosynthesis of isoprenoid compounds that are building blocks of archaeal membrane lipids. The protein is Hydroxymethylglutaryl-CoA synthase of Thermoplasma acidophilum (strain ATCC 25905 / DSM 1728 / JCM 9062 / NBRC 15155 / AMRC-C165).